The primary structure comprises 186 residues: Large ribosomal subunit protein eL15 (186 aa).

Residues 163–186 are disordered; the sequence is RGLTSAGKKGRGLNKKGKGAEKVR. Residues 170–179 are compositionally biased toward basic residues; the sequence is KKGRGLNKKG.

The protein belongs to the eukaryotic ribosomal protein eL15 family.

The protein is Large ribosomal subunit protein eL15 of Methanosphaera stadtmanae (strain ATCC 43021 / DSM 3091 / JCM 11832 / MCB-3).